The primary structure comprises 290 residues: Glyceraldehyde-3-phosphate dehydrogenase (290 aa).

2 residues coordinate NAD(+): aspartate 13 and arginine 58. Residues 129-131 (SCT), threonine 160, 189-190 (TG), and arginine 212 each bind D-glyceraldehyde 3-phosphate. Cysteine 130 functions as the Nucleophile in the catalytic mechanism.

This sequence belongs to the glyceraldehyde-3-phosphate dehydrogenase family. As to quaternary structure, homotetramer.

It is found in the cytoplasm. It catalyses the reaction D-glyceraldehyde 3-phosphate + phosphate + NAD(+) = (2R)-3-phospho-glyceroyl phosphate + NADH + H(+). Its pathway is carbohydrate degradation; glycolysis; pyruvate from D-glyceraldehyde 3-phosphate: step 1/5. The polypeptide is Glyceraldehyde-3-phosphate dehydrogenase (GPD) (Lactarius deterrimus (False saffron milkcap)).